We begin with the raw amino-acid sequence, 158 residues long: Transcription elongation factor GreA (158 aa).

Residues 14 to 76 (VKKLEEELEY…QIENMLKNAN (63 aa)) adopt a coiled-coil conformation.

It belongs to the GreA/GreB family.

Its function is as follows. Necessary for efficient RNA polymerase transcription elongation past template-encoded arresting sites. The arresting sites in DNA have the property of trapping a certain fraction of elongating RNA polymerases that pass through, resulting in locked ternary complexes. Cleavage of the nascent transcript by cleavage factors such as GreA or GreB allows the resumption of elongation from the new 3'terminus. GreA releases sequences of 2 to 3 nucleotides. This is Transcription elongation factor GreA from Clostridium acetobutylicum (strain ATCC 824 / DSM 792 / JCM 1419 / IAM 19013 / LMG 5710 / NBRC 13948 / NRRL B-527 / VKM B-1787 / 2291 / W).